A 306-amino-acid chain; its full sequence is Protoheme IX farnesyltransferase (306 aa).

Transmembrane regions (helical) follow at residues 35 to 55 (LIVF…PTWL), 61 to 81 (LIAC…NCLV), 106 to 126 (LTLA…YVWV), 129 to 149 (LTMW…TVIL), 157 to 177 (IVIG…AMTG), 183 to 203 (ALIL…ALAL), 224 to 244 (EFTR…CLMP), 245 to 265 (FIFK…SIGF), and 286 to 306 (RFSL…HYLI).

The protein belongs to the UbiA prenyltransferase family. Protoheme IX farnesyltransferase subfamily.

Its subcellular location is the cell inner membrane. The enzyme catalyses heme b + (2E,6E)-farnesyl diphosphate + H2O = Fe(II)-heme o + diphosphate. Its pathway is porphyrin-containing compound metabolism; heme O biosynthesis; heme O from protoheme: step 1/1. Functionally, converts heme B (protoheme IX) to heme O by substitution of the vinyl group on carbon 2 of heme B porphyrin ring with a hydroxyethyl farnesyl side group. The sequence is that of Protoheme IX farnesyltransferase from Polaromonas naphthalenivorans (strain CJ2).